Here is a 180-residue protein sequence, read N- to C-terminus: Cytochrome c oxidase assembly protein CtaG (180 aa).

At 1-8 the chain is on the cytoplasmic side; sequence MSKKSNKS. Residues 9–29 traverse the membrane as a helical; Signal-anchor for type II membrane protein segment; that stretch reads LAFSLLGLIVSMVLLSFAAVP. Residues 30 to 180 are Periplasmic-facing; the sequence is LYNLFCKVTG…SFFKVRDVKK (151 aa).

It belongs to the COX11/CtaG family.

It is found in the cell inner membrane. In terms of biological role, exerts its effect at some terminal stage of cytochrome c oxidase synthesis, probably by being involved in the insertion of the copper B into subunit I. This Rickettsia bellii (strain RML369-C) protein is Cytochrome c oxidase assembly protein CtaG.